Reading from the N-terminus, the 48-residue chain is Small ribosomal subunit protein uS14 (48 aa).

Zn(2+)-binding residues include C13, C16, C31, and C34.

It belongs to the universal ribosomal protein uS14 family. Zinc-binding uS14 subfamily. As to quaternary structure, part of the 30S ribosomal subunit. Zn(2+) is required as a cofactor.

Binds 16S rRNA, required for the assembly of 30S particles. This chain is Small ribosomal subunit protein uS14, found in Methanopyrus kandleri (strain AV19 / DSM 6324 / JCM 9639 / NBRC 100938).